We begin with the raw amino-acid sequence, 337 residues long: Probable RuBisCO transcriptional regulator (337 aa).

The 58-residue stretch at 6 to 63 folds into the HTH lysR-type domain; sequence FTLDQLRILKAIAVEGSFKRAADSLYVSQPAVSLQVQNLERQLDVPLFDRGGRRAQLT. The H-T-H motif DNA-binding region spans 23-42; sequence FKRAADSLYVSQPAVSLQVQ.

This sequence belongs to the LysR transcriptional regulatory family.

Functionally, trans-acting transcriptional regulator of RuBisCO genes (rbcL and rbcS) expression. This chain is Probable RuBisCO transcriptional regulator (rbcR), found in Nostoc sp. (strain PCC 7120 / SAG 25.82 / UTEX 2576).